A 415-amino-acid chain; its full sequence is MSNINYAPTIWSRADALKVNENDPTTTQPLVSPDFPVMSDTVFIWDTMPLRELDGTVVSVNGWSVIVTLTADRHPDDPQYVGANGRYDIKRDWEDRHGRARMCYWYSRTGKDWIFGGRVMAEGVSPTTREWAGTPVLLNDKGDIDLYYTCVTPGAAIAKVRGRIVTSDKGVELKDFTEVKTLFEADGKYYQTEAQNSTWNFRDPSPFIDPNDGKLYMVFEGNVAGERGTHTVGAAELGPVPPGHEETGGARFQVGCIGLAVAKDLSGDEWEILPPLVTAVGVNDQTERPHYVFQDGKYYLFTISHKFTYADGVTGPDGVYGFVGEHLFGPYRPMNASGLVLGNPPAQPFQTYSHCVMPNGLVTSFIDSVPTSGEDYRIGGTEAPTVRILLEGDRSFVQEVYDYGYIPAMKNVVLS.

Residues W45, D46, A132, R202, and D203 each contribute to the sucrose site. Residue D46 is the Nucleophile of the active site. E287 acts as the Proton donor/acceptor in catalysis.

It belongs to the glycosyl hydrolase 68 family.

The protein localises to the periplasm. The catalysed reaction is [6)-beta-D-fructofuranosyl-(2-&gt;](n) alpha-D-glucopyranoside + sucrose = [6)-beta-D-fructofuranosyl-(2-&gt;](n+1) alpha-D-glucopyranoside + D-glucose. Its function is as follows. Catalyzes the synthesis of levan, a fructose polymer, by transferring the fructosyl moiety from sucrose to a growing acceptor molecule. LscA encodes a functional enzyme in vitro, when expressed in E.coli under control of the vector-based lactose promoter (Plac), and it can restore levan production to the lscB-lscC double mutant. However, lscA is not expressed in P.savastanoi pv. glycinea PG4180 under standard conditions. It could be an ancestral Lsc variant in P.syringae. The polypeptide is Levansucrase LscA (Pseudomonas savastanoi pv. glycinea (Pseudomonas syringae pv. glycinea)).